The sequence spans 375 residues: Alpha-2,8-sialyltransferase 8B (375 aa).

Residues 1–6 lie on the Cytoplasmic side of the membrane; the sequence is MQLQFR. The helical; Signal-anchor for type II membrane protein transmembrane segment at 7–23 threads the bilayer; it reads SWMLAALTLLVVFLIFA. Over 24–375 the chain is Lumenal; that stretch reads DISEIEEEIG…LTVGQCDGAT (352 aa). N-linked (GlcNAc...) asparagine glycosylation is found at asparagine 60, asparagine 72, asparagine 89, and asparagine 134. 2 disulfides stabilise this stretch: cysteine 157–cysteine 307 and cysteine 171–cysteine 371. Residues asparagine 162 and asparagine 185 each coordinate CMP-N-acetyl-beta-neuraminate. Asparagine 219 and asparagine 234 each carry an N-linked (GlcNAc...) asparagine glycan. Residues threonine 294, threonine 295, glycine 296, tryptophan 316, tyrosine 329, and histidine 330 each contribute to the CMP-N-acetyl-beta-neuraminate site. Histidine 346 functions as the Proton donor/acceptor in the catalytic mechanism.

Belongs to the glycosyltransferase 29 family. Autopolysialylated. Autopolysialylation is not a prerequisite for the polysialylation acitity, but enhances the polysialylation acitity.

It is found in the golgi apparatus membrane. The protein localises to the secreted. Its subcellular location is the cell membrane. The enzyme catalyses [N-acetyl-alpha-D-neuraminosyl-(2-&gt;8)](n) + CMP-N-acetyl-beta-neuraminate = [N-acetyl-alpha-D-neuraminosyl-(2-&gt;8)](n+1) + CMP + H(+). Its pathway is protein modification; protein glycosylation. Catalyzes the transfer of a sialic acid from a CMP-linked sialic acid donor onto a terminal alpha-2,3-, alpha-2,6-, or alpha-2,8-linked sialic acid of an N-linked glycan acceptor through alpha-2,8-linkages. Therefore, participates in polysialic acid synthesis on various sialylated N-acetyllactosaminyl oligosaccharides (alpha-2,3-, alpha-2,6-, or alpha-2,8-linked sialic acid), including NCAM1, NCAM1 N-glycans, FETUB N-glycans, and to a lesser extent sialylparagloboside (SPG) and AHSG, which does not require the initial addition of an alpha 2,8-sialic acid. However, does not exhibit sialic acid-polymerase activity. Catalyzes polysialic acid synthesis in the hippocampal on NCAM1 and supports neurite outgrowth. ST8SIA2-mediated polysialylation influences on oligodendrocyte differentiation and may promote the integrity of myelin and axons. The protein is Alpha-2,8-sialyltransferase 8B of Mus musculus (Mouse).